Consider the following 201-residue polypeptide: Cytochrome c oxidase subunit 3 (201 aa).

4 helical membrane passes run 25–45 (VLGLLVFLISESLMFGGLFAA), 65–85 (LFVPTINTLILISSSFVIHYG), 100–120 (WYWITAAMGAVFLGGQVYEYL), and 137–157 (VMTGFHGLHVFIGILLILGVI).

The protein belongs to the cytochrome c oxidase subunit 3 family.

The protein localises to the cell membrane. The enzyme catalyses 4 Fe(II)-[cytochrome c] + O2 + 8 H(+)(in) = 4 Fe(III)-[cytochrome c] + 2 H2O + 4 H(+)(out). This is Cytochrome c oxidase subunit 3 (ctaE) from Thermostichus vulcanus (Synechococcus vulcanus).